Reading from the N-terminus, the 427-residue chain is Putative acyl-CoA thioester hydrolase YbhC (427 aa).

An N-terminal signal peptide occupies residues Met-1 to Ala-21. Cys-22 carries the N-palmitoyl cysteine lipid modification. Cys-22 carries the S-diacylglycerol cysteine lipid modification. A disordered region spans residues Ser-23–Arg-42. The cysteines at positions 185 and 197 are disulfide-linked. The active-site Nucleophile is the Asp-285. Arg-345 is a binding site for substrate.

This sequence belongs to the pectinesterase family.

It localises to the cell outer membrane. In terms of biological role, putative thioesterase. Does not bind pectin, and has no pectinesterase activity. In Escherichia coli (strain K12), this protein is Putative acyl-CoA thioester hydrolase YbhC (ybhC).